The chain runs to 342 residues: Phosphate acyltransferase (342 aa).

Belongs to the PlsX family. Homodimer. Probably interacts with PlsY.

It localises to the cytoplasm. It catalyses the reaction a fatty acyl-[ACP] + phosphate = an acyl phosphate + holo-[ACP]. It participates in lipid metabolism; phospholipid metabolism. Functionally, catalyzes the reversible formation of acyl-phosphate (acyl-PO(4)) from acyl-[acyl-carrier-protein] (acyl-ACP). This enzyme utilizes acyl-ACP as fatty acyl donor, but not acyl-CoA. In Actinobacillus succinogenes (strain ATCC 55618 / DSM 22257 / CCUG 43843 / 130Z), this protein is Phosphate acyltransferase.